Consider the following 280-residue polypeptide: Probable cell division protein WhiA (280 aa).

Positions 247–279 (SLEQIANFFFTKYNIKISRSGIQHFSVNLKKLC) form a DNA-binding region, H-T-H motif.

Belongs to the WhiA family.

In terms of biological role, involved in cell division and chromosome segregation. The polypeptide is Probable cell division protein WhiA (Mycoplasma genitalium (strain ATCC 33530 / DSM 19775 / NCTC 10195 / G37) (Mycoplasmoides genitalium)).